Here is a 142-residue protein sequence, read N- to C-terminus: Hemoglobin subunit alpha (142 aa).

The 141-residue stretch at 2–142 (VLSPADKTNV…VSTVLTSKYR (141 aa)) folds into the Globin domain. Serine 4 is modified (phosphoserine). Position 8 is an N6-succinyllysine (lysine 8). Threonine 9 is subject to Phosphothreonine. N6-succinyllysine is present on lysine 12. Lysine 17 carries the post-translational modification N6-acetyllysine; alternate. N6-succinyllysine; alternate is present on lysine 17. Phosphotyrosine is present on tyrosine 25. Serine 36 carries the phosphoserine modification. The residue at position 41 (lysine 41) is an N6-succinyllysine. Position 50 is a phosphoserine (serine 50). Histidine 59 contacts O2. Histidine 88 provides a ligand contact to heme b. Phosphoserine is present on serine 103. Threonine 109 is subject to Phosphothreonine. Phosphoserine occurs at positions 125 and 132. Phosphothreonine occurs at positions 135 and 138. Serine 139 bears the Phosphoserine mark.

Belongs to the globin family. In terms of assembly, heterotetramer of two alpha chains and two beta chains in adult hemoglobin A (HbA); two alpha chains and two delta chains in adult hemoglobin A2 (HbA2); two alpha chains and two epsilon chains in early embryonic hemoglobin Gower-2; two alpha chains and two gamma chains in fetal hemoglobin F (HbF). As to expression, red blood cells.

Its function is as follows. Involved in oxygen transport from the lung to the various peripheral tissues. Hemopressin acts as an antagonist peptide of the cannabinoid receptor CNR1. Hemopressin-binding efficiently blocks cannabinoid receptor CNR1 and subsequent signaling. The sequence is that of Hemoglobin subunit alpha (HBA1) from Pan paniscus (Pygmy chimpanzee).